The chain runs to 181 residues: Photosystem I assembly protein Ycf4 (181 aa).

The next 2 helical transmembrane spans lie at 19-41 and 61-83; these read YAWC…GSYF and IVMM…SIFT.

Belongs to the Ycf4 family.

It localises to the plastid. The protein localises to the chloroplast thylakoid membrane. Its function is as follows. Seems to be required for the assembly of the photosystem I complex. This is Photosystem I assembly protein Ycf4 from Guillardia theta (Cryptophyte).